The sequence spans 283 residues: Shikimate dehydrogenase (NADP(+)) (283 aa).

Residues 16 to 18 (SLS) and Thr63 each bind shikimate. Lys67 functions as the Proton acceptor in the catalytic mechanism. Asp79 lines the NADP(+) pocket. Positions 88 and 103 each coordinate shikimate. Residues 128-132 (GAGGA), Ala223, and Gly243 each bind NADP(+).

The protein belongs to the shikimate dehydrogenase family. As to quaternary structure, homodimer.

The catalysed reaction is shikimate + NADP(+) = 3-dehydroshikimate + NADPH + H(+). It functions in the pathway metabolic intermediate biosynthesis; chorismate biosynthesis; chorismate from D-erythrose 4-phosphate and phosphoenolpyruvate: step 4/7. Functionally, involved in the biosynthesis of the chorismate, which leads to the biosynthesis of aromatic amino acids. Catalyzes the reversible NADPH linked reduction of 3-dehydroshikimate (DHSA) to yield shikimate (SA). In Xanthomonas campestris pv. campestris (strain B100), this protein is Shikimate dehydrogenase (NADP(+)).